The primary structure comprises 580 residues: NADH-quinone oxidoreductase subunit C/D (580 aa).

The tract at residues M1–F171 is NADH dehydrogenase I subunit C. Residues E195–R580 are NADH dehydrogenase I subunit D.

In the N-terminal section; belongs to the complex I 30 kDa subunit family. The protein in the C-terminal section; belongs to the complex I 49 kDa subunit family. NDH-1 is composed of 13 different subunits. Subunits NuoB, CD, E, F, and G constitute the peripheral sector of the complex.

The protein localises to the cell inner membrane. It catalyses the reaction a quinone + NADH + 5 H(+)(in) = a quinol + NAD(+) + 4 H(+)(out). NDH-1 shuttles electrons from NADH, via FMN and iron-sulfur (Fe-S) centers, to quinones in the respiratory chain. The immediate electron acceptor for the enzyme in this species is believed to be ubiquinone. Couples the redox reaction to proton translocation (for every two electrons transferred, four hydrogen ions are translocated across the cytoplasmic membrane), and thus conserves the redox energy in a proton gradient. In Cereibacter sphaeroides (strain ATCC 17029 / ATH 2.4.9) (Rhodobacter sphaeroides), this protein is NADH-quinone oxidoreductase subunit C/D.